A 614-amino-acid polypeptide reads, in one-letter code: Pentatricopeptide repeat-containing protein At1g63080, mitochondrial (614 aa).

The N-terminal 7 residues, 1 to 7, are a transit peptide targeting the mitochondrion; the sequence is MSLAKRF. PPR repeat units follow at residues 64–98, 99–133, 134–168, 169–203, 204–238, 239–273, 274–308, 309–343, 344–378, 379–413, 414–448, 449–483, 484–518, 519–553, and 554–588; these read SIVE…GVSH, NLYT…GYGP, SIVT…GYQP, DTVT…GCQP, DLVT…KIEA, DVVI…GIRP, DVFT…KINP, NVVT…SIDP, NIVT…DCLP, DVVT…GLVG, NTVT…GVHP, NIMT…KMEP, DIYT…GVKP, DVIA…GPLP, and DSGT…RFAG.

This sequence belongs to the PPR family. P subfamily.

It is found in the mitochondrion. The polypeptide is Pentatricopeptide repeat-containing protein At1g63080, mitochondrial (Arabidopsis thaliana (Mouse-ear cress)).